We begin with the raw amino-acid sequence, 441 residues long: MGEKPNRIGRANISYINHDHIFLPSFQPSYPSRQLHPLISSQNKVHSSIVHLPKVASPSSPETQQHSQAPLFITHIMSGLPQALASGFAARVREGGTTLYINTTPMLRSARHNTAVNYAEFEEDFDANDFEDDDDDDQSQRESRDGSEEAEGDEDGTKKEEQDKFAGLKAPLVSNEPKRAAPPVRPVMYPQEVLEELSQVKEPTLIPIRVAVENIDVFRVQDFFLWDADEKILTPEQFATLTCADLDVPIGYSAQMSAQIKKQLAEYTAAPALPKDVEVHVIVELAVTVDKIVYEDKFEWDLSGEYATPQEFARTVVQDLGLGQEFYPAITYQLYETLGKLQKAWLERSIPLDVDNRAAFGLEAGLRVDQDNLGESWVPRVEEMTPEEMQKREMERDRSSRRLKRESARMAEVPYVDLDSLYSRKRRRRFDEDSRSGSPMW.

Positions 124 to 137 (DFDANDFEDDDDDD) are enriched in acidic residues. Disordered stretches follow at residues 124 to 183 (DFDA…AAPP) and 383 to 407 (EMTPEEMQKREMERDRSSRRLKRES). Composition is skewed to basic and acidic residues over residues 138 to 147 (QSQRESRDGS) and 155 to 166 (DGTKKEEQDKFA).

It belongs to the SNF5 family.

Its subcellular location is the nucleus. Functionally, part of the chromatin structure-remodeling complex (RSC) which is involved in transcription regulation and nucleosome positioning. RSC is responsible for the transfer of a histone octamer from a nucleosome core particle to naked DNA. The reaction requires ATP and involves an activated RSC-nucleosome intermediate. Remodeling reaction also involves DNA translocation, DNA twist and conformational change. As a reconfigurer of centromeric and flanking nucleosomes, RSC complex is required both for proper kinetochore function in chromosome segregation and, via a PKC1-dependent signaling pathway, for organization of the cellular cytoskeleton. This subunit is essential for mitotic growth and required for cell cycle progression. The polypeptide is Chromatin structure-remodeling complex subunit SFH1 (SFH1) (Yarrowia lipolytica (strain CLIB 122 / E 150) (Yeast)).